The chain runs to 371 residues: 4-hydroxy-3-methylbut-2-en-1-yl diphosphate synthase (flavodoxin) (371 aa).

Residues Cys270, Cys273, Cys305, and Glu312 each contribute to the [4Fe-4S] cluster site.

This sequence belongs to the IspG family. [4Fe-4S] cluster serves as cofactor.

The catalysed reaction is (2E)-4-hydroxy-3-methylbut-2-enyl diphosphate + oxidized [flavodoxin] + H2O + 2 H(+) = 2-C-methyl-D-erythritol 2,4-cyclic diphosphate + reduced [flavodoxin]. Its pathway is isoprenoid biosynthesis; isopentenyl diphosphate biosynthesis via DXP pathway; isopentenyl diphosphate from 1-deoxy-D-xylulose 5-phosphate: step 5/6. Its function is as follows. Converts 2C-methyl-D-erythritol 2,4-cyclodiphosphate (ME-2,4cPP) into 1-hydroxy-2-methyl-2-(E)-butenyl 4-diphosphate. The polypeptide is 4-hydroxy-3-methylbut-2-en-1-yl diphosphate synthase (flavodoxin) (Psychrobacter arcticus (strain DSM 17307 / VKM B-2377 / 273-4)).